An 80-amino-acid chain; its full sequence is Gamma-conotoxin-like Am6.6 (80 aa).

The signal sequence occupies residues 1 to 19 (MEKLTILLLVAAILMSTQA). A propeptide spanning residues 20-45 (LNQEQRQQAKINLLSKKKPSAERWRR) is cleaved from the precursor. Cystine bridges form between Cys47–Cys61, Cys54–Cys65, and Cys60–Cys70. 2 positions are modified to 4-carboxyglutamate: Glu56 and Glu59. The residue at position 71 (Glu71) is a 4-carboxyglutamate. Pro76 carries the post-translational modification 4-hydroxyproline. A propeptide spanning residues 78 to 80 (RAI) is cleaved from the precursor.

Belongs to the conotoxin O2 family. In terms of tissue distribution, expressed by the venom duct.

The protein localises to the secreted. Functionally, gamma-conotoxins may act on voltage-gated non-specific cation pacemaker channels (HCN). This Conus amadis (Amadis cone) protein is Gamma-conotoxin-like Am6.6.